The chain runs to 333 residues: tRNA(Ile)-lysidine synthase (333 aa).

Serine 33–serine 38 is a binding site for ATP.

Belongs to the tRNA(Ile)-lysidine synthase family.

The protein localises to the cytoplasm. It catalyses the reaction cytidine(34) in tRNA(Ile2) + L-lysine + ATP = lysidine(34) in tRNA(Ile2) + AMP + diphosphate + H(+). In terms of biological role, ligates lysine onto the cytidine present at position 34 of the AUA codon-specific tRNA(Ile) that contains the anticodon CAU, in an ATP-dependent manner. Cytidine is converted to lysidine, thus changing the amino acid specificity of the tRNA from methionine to isoleucine. The sequence is that of tRNA(Ile)-lysidine synthase from Salinispora arenicola (strain CNS-205).